Reading from the N-terminus, the 933-residue chain is Phosphoenolpyruvate carboxylase (933 aa).

Active-site residues include His158 and Lys592.

Belongs to the PEPCase type 1 family. The cofactor is Mg(2+).

It catalyses the reaction oxaloacetate + phosphate = phosphoenolpyruvate + hydrogencarbonate. Its function is as follows. Forms oxaloacetate, a four-carbon dicarboxylic acid source for the tricarboxylic acid cycle. The chain is Phosphoenolpyruvate carboxylase from Nitrosomonas europaea (strain ATCC 19718 / CIP 103999 / KCTC 2705 / NBRC 14298).